The chain runs to 209 residues: Thymidine kinase (209 aa).

ATP-binding positions include 25-32 (GCMFAGKT) and 103-106 (DEVQ). Glu104 acts as the Proton acceptor in catalysis. Cys160, Cys163, Cys198, and Cys201 together coordinate Zn(2+).

Belongs to the thymidine kinase family. Homotetramer.

It is found in the cytoplasm. It catalyses the reaction thymidine + ATP = dTMP + ADP + H(+). This chain is Thymidine kinase, found in Mycoplasma capricolum subsp. capricolum (strain California kid / ATCC 27343 / NCTC 10154).